The following is a 593-amino-acid chain: Transcriptional repressor p66-beta (593 aa).

At serine 17 the chain carries Phosphoserine. Glycyl lysine isopeptide (Lys-Gly) (interchain with G-Cter in SUMO2) cross-links involve residues lysine 33, lysine 66, and lysine 97. The interval 62–123 is disordered; that stretch reads ELPTKQDGSG…PERGRLTPSP (62 aa). 2 stretches are compositionally biased toward basic and acidic residues: residues 74–100 and 108–118; these read GYEE…KENI and SARRSEPERGR. Threonine 120 bears the Phosphothreonine mark. Serine 122, serine 129, serine 134, and serine 135 each carry phosphoserine. The stretch at 140–194 forms a coiled coil; the sequence is SRMEERLKAANLEMFKGKGIEERQQLIKQLRDELRLEEARLVLLKKLRQSQLQKE. Lysine 147 participates in a covalent cross-link: Glycyl lysine isopeptide (Lys-Gly) (interchain with G-Cter in SUMO2). The tract at residues 165 to 195 is CR1; interaction with MBD2 and MBD3; the sequence is LIKQLRDELRLEEARLVLLKKLRQSQLQKEN. Lysine 199 is covalently cross-linked (Glycyl lysine isopeptide (Lys-Gly) (interchain with G-Cter in SUMO2)). Serine 208 bears the Phosphoserine mark. Residues 213 to 235 form a disordered region; it reads SPAHVGQQGLSKLPSRPGAQGVE. A Glycyl lysine isopeptide (Lys-Gly) (interchain with G-Cter in SUMO2) cross-link involves residue lysine 281. A phosphoserine mark is found at serine 333, serine 338, and serine 340. Residues 340–480 form a CR2; histone tail-binding region; the sequence is SAMTDAANSQ…QEQEIEQRLQ (141 aa). Glycyl lysine isopeptide (Lys-Gly) (interchain with G-Cter in SUMO2) cross-links involve residues lysine 353, lysine 454, and lysine 467. The GATA-type zinc-finger motif lies at 414–467; the sequence is RVEPFVCAQCRTDFTPHWKQEKNGKILCEQCMTSNQKKALKAEHTNRLKNAFVK. A coiled-coil region spans residues 449–482; the sequence is QKKALKAEHTNRLKNAFVKALQQEQEIEQRLQQQ. At serine 486 the chain carries Phosphoserine. A Glycyl lysine isopeptide (Lys-Gly) (interchain with G-Cter in SUMO2) cross-link involves residue lysine 498.

As to quaternary structure, homooligomer. Component of the nucleosome remodeling and deacetylase (NuRD) repressor complex, composed of core proteins MTA1, MTA2, MTA3, RBBP4, RBBP7, HDAC1, HDAC2, MBD2, MBD3, and peripherally associated proteins CDK2AP1, CDK2AP2, GATAD2A, GATAD2B, CHD3, CHD4 and CHD5. The exact stoichiometry of the NuRD complex is unknown, and some subunits such as MBD2 and MBD3, GATAD2A and GATAD2B, and CHD3, CHD4 and CHD5 define mutually exclusive NuRD complexes. Interacts with MBD2; this is required for the enhancement of MBD2-mediated repression and for targeting to the chromatin. Interacts with MBD3. Component of the MeCP1 histone deacetylase complex. Interacts with histone tails, including that of histones H2A, H2B, H3 and H4. Interacts with ERCC6. Widely expressed.

It localises to the nucleus speckle. The protein localises to the nucleus. The protein resides in the chromosome. In terms of biological role, transcriptional repressor. Acts as a component of the histone deacetylase NuRD complex which participates in the remodeling of chromatin. Enhances MBD2-mediated repression. Efficient repression requires the presence of GATAD2A. Targets MBD3 to discrete loci in the nucleus. May play a role in synapse development. The sequence is that of Transcriptional repressor p66-beta (GATAD2B) from Homo sapiens (Human).